Here is a 287-residue protein sequence, read N- to C-terminus: Putative B3 domain-containing protein Os08g0157700 (287 aa).

Positions Ala-17–Gln-29 are enriched in acidic residues. Residues Ala-17–Ala-36 are disordered. A DNA-binding region (TF-B3) is located at residues Phe-71 to His-168.

The protein resides in the nucleus. The sequence is that of Putative B3 domain-containing protein Os08g0157700 from Oryza sativa subsp. japonica (Rice).